The sequence spans 370 residues: Ubiquitin carboxyl-terminal hydrolase 12 (370 aa).

Residues 1-4 (MEIL) carry the Required for plasma membrane localization of USP12/WDR20 motif. Residues 39 to 369 (FGLVNFGNTC…SGYILFYQSR (331 aa)) enclose the USP domain. Catalysis depends on Cys48, which acts as the Nucleophile. Residues 146–157 (QEKQNGRLRNGD) show a composition bias toward basic and acidic residues. Residues 146–168 (QEKQNGRLRNGDVDNEDNNSTPD) are disordered. Zn(2+)-binding residues include Cys186, Cys189, Cys233, and Cys236. His317 acts as the Proton acceptor in catalysis.

The protein belongs to the peptidase C19 family. USP12/USP46 subfamily. Interacts with WDR48. Interacts with WDR20; this interaction promotes translocation of the USP12 complex to the plasma membrane. Component of the USP12/WDR20/WDR48 deubiquitinating complex. Component of the USP12/DMWD/WDR48 deubiquitinating complex. Interacts with PHLPP1. Interacts with RBPJ. Interacts with CBP; this interaction blocks the acetyltransferase activity of CREBBP.

It localises to the nucleus. The protein resides in the cytoplasm. The protein localises to the cell membrane. It catalyses the reaction Thiol-dependent hydrolysis of ester, thioester, amide, peptide and isopeptide bonds formed by the C-terminal Gly of ubiquitin (a 76-residue protein attached to proteins as an intracellular targeting signal).. With respect to regulation, activated by interaction with WDR20; WDR48 and DMWD through different allosteric mechanisms. In terms of biological role, deubiquitinating enzyme that plays various roles in the regulation of the immune response and inflammation. During TCR engagement and activation, translocates into the cytoplasm and deubiquitinates its substrates LAT and TRAT1 and prevents their lysosome-dependent degradation to stabilize the TCR signaling complex at the plasma membrane. Plays an essential role in the selective LPS-induced macrophage response through the activation of NF-kappa-B pathway. In addition, promotes that antiviral immune response through targeting DNA sensor IFI16 to inhibit its proteasome-dependent degradation. Participates in the interferon signaling pathway and antiviral response independently of its deubiquitinase activity by maintaining nuclear phosphorylated STAT1 levels via inhibition of its CREBBP-mediated acetylation and subsequent dephosphorylation. Plays an intrinsic role in promoting the differentiation, activation and proliferation of CD4(+) T-cell by activating the NF-kappa-B signaling pathway through deubiquitinating and stabilizing B-cell lymphoma/leukemia 10/BCL10. In myeloid-derived suppressor cells promotes the activation of the NF-kappa-B via deubiquitination and stabilization of RELA. Regulates the 'Lys-63'-linked polyubiquitin chains of BAX and thereby modulates the mitochondrial apoptotic process. Negative regulator of NOTCH signaling that specifically deubiquitinates non-activated NOTCH receptors to target them for lysosomal degradation; deubiquitination of NOTCH stimulates its transport form late endosomes to lysosomes. Protects neurons against HTT/huntingtin-induced polyglutamine expansion-dependent neurodegeneration through regulation of autophagic flux. This function is independent of deubiquitinase activity or of other components of the USP12-WDR20-WDR48 deubiquitinating complex. In complex with WDR48, acts as a potential tumor suppressor by positively regulating PHLPP1 stability. The polypeptide is Ubiquitin carboxyl-terminal hydrolase 12 (Usp12) (Mus musculus (Mouse)).